A 194-amino-acid polypeptide reads, in one-letter code: Small ribosomal subunit protein uS11m (194 aa).

It belongs to the universal ribosomal protein uS11 family. Component of the mitochondrial small ribosomal subunit (mt-SSU). Mature mammalian 55S mitochondrial ribosomes consist of a small (28S) and a large (39S) subunit. The 28S small subunit contains a 12S ribosomal RNA (12S mt-rRNA) and 30 different proteins. The 39S large subunit contains a 16S rRNA (16S mt-rRNA), a copy of mitochondrial valine transfer RNA (mt-tRNA(Val)), which plays an integral structural role, and 52 different proteins.

It is found in the mitochondrion. The protein is Small ribosomal subunit protein uS11m (MRPS11) of Homo sapiens (Human).